Here is a 218-residue protein sequence, read N- to C-terminus: Sodium channel regulatory subunit beta-1 (218 aa).

Positions 1 to 18 are cleaved as a signal peptide; sequence MGTLLALVVGAALVSSAW. Topologically, residues 19–157 are extracellular; sequence GGCVEVDSET…DKANRDMASI (139 aa). Intrachain disulfides connect C21–C43 and C40–C121. Residues 22 to 150 enclose the Ig-like C2-type domain; it reads VEVDSETEAV…KIHIEVVDKA (129 aa). N-linked (GlcNAc...) asparagine glycans are attached at residues N93, N110, N114, and N135. Residues 158-179 form a helical membrane-spanning segment; that stretch reads VSEIMMYVLIVVLTIWLVAEMV. At 180–218 the chain is on the cytoplasmic side; the sequence is YCYKKIAAATEAAAQENASEYLAITSESKENCTGVQVAE.

This sequence belongs to the sodium channel auxiliary subunit SCN1B (TC 8.A.17) family. In terms of assembly, a voltage-gated sodium (Nav) channel consists of an ion-conducting pore-forming alpha subunit functional on its own that is regulated by one or more beta subunits. Interacts with SCN1A; regulatory subunit of SCN1A/Nav1.1. Interacts with SCN3A; regulatory subunit of SCN3A/Nav1.3. Interacts with SCN4A; regulatory subunit of SCN4A/Nav1.4. Interacts with SCN5A; regulatory subunit of SCN5A/Nav1.5. Interacts with SCN8A; regulatory subunit of SCN8A/Nav1.6. Interacts with SCN9A; regulatory subunit of SCN9A/Nav1.7. Interacts with SCN10A; regulatory subunit of SCN10A/Nav1.8. Interacts with NFASC. Interacts with TMEM65.

The protein resides in the cell membrane. It localises to the perikaryon. Its subcellular location is the cell projection. The protein localises to the axon. Its function is as follows. Regulatory subunit of multiple voltage-gated sodium (Nav) channels directly mediating the depolarization of excitable membranes. Navs, also called VGSCs (voltage-gated sodium channels) or VDSCs (voltage-dependent sodium channels), operate by switching between closed and open conformations depending on the voltage difference across the membrane. In the open conformation they allow Na(+) ions to selectively pass through the pore, along their electrochemical gradient. The influx of Na+ ions provokes membrane depolarization, initiating the propagation of electrical signals throughout cells and tissues. The accessory beta subunits participate in localization and functional modulation of the Nav channels. Modulates the activity of SCN1A/Nav1.1, SCN2A/Nav1.2, SCN3A/Nav1.3, SCN4A/Nav1.4, SCN5A/Nav1.5, SCN8A/Nav1.6, SCN9A/Nav1.7 and SCN10A/Nav1.8. This chain is Sodium channel regulatory subunit beta-1, found in Canis lupus familiaris (Dog).